A 418-amino-acid polypeptide reads, in one-letter code: Multidrug resistance protein MdtG (418 aa).

The next 11 helical transmembrane spans lie at 19 to 39, 56 to 76, 90 to 110, 113 to 133, 144 to 164, 171 to 191, 222 to 242, 251 to 271, 288 to 308, 317 to 337, and 376 to 396; these read IGCF…PLYV, LVFS…GGLA, LGMA…QFLI, ALLG…ATQI, TLST…GVLA, PVFF…LLFI, LFVT…ILTL, VANI…AALI, ILIA…FVQT, FLLG…LVYN, and AVFL…GLSL.

This sequence belongs to the major facilitator superfamily. DHA1 family. MdtG (TC 2.A.1.2.20) subfamily.

Its subcellular location is the cell inner membrane. This Enterobacter lignolyticus (strain SCF1) protein is Multidrug resistance protein MdtG.